The primary structure comprises 103 residues: Small ribosomal subunit protein uS10 (103 aa).

Belongs to the universal ribosomal protein uS10 family. Part of the 30S ribosomal subunit.

Involved in the binding of tRNA to the ribosomes. This is Small ribosomal subunit protein uS10 from Nitratiruptor sp. (strain SB155-2).